A 93-amino-acid polypeptide reads, in one-letter code: Large ribosomal subunit protein uL23cz/uL23cy (93 aa).

The protein belongs to the universal ribosomal protein uL23 family. As to quaternary structure, part of the 50S ribosomal subunit.

The protein localises to the plastid. Its subcellular location is the chloroplast. Binds to 23S rRNA. The polypeptide is Large ribosomal subunit protein uL23cz/uL23cy (rpl23-A) (Phaseolus angularis (Azuki bean)).